The chain runs to 447 residues: N-succinylarginine dihydrolase (447 aa).

Substrate contacts are provided by residues alanine 19–serine 28, asparagine 110, and histidine 137–arginine 138. The active site involves glutamate 174. Residue arginine 212 coordinates substrate. Residue histidine 248 is part of the active site. Residues aspartate 250 and asparagine 359 each coordinate substrate. Cysteine 365 serves as the catalytic Nucleophile.

This sequence belongs to the succinylarginine dihydrolase family. As to quaternary structure, homodimer.

The enzyme catalyses N(2)-succinyl-L-arginine + 2 H2O + 2 H(+) = N(2)-succinyl-L-ornithine + 2 NH4(+) + CO2. It participates in amino-acid degradation; L-arginine degradation via AST pathway; L-glutamate and succinate from L-arginine: step 2/5. Catalyzes the hydrolysis of N(2)-succinylarginine into N(2)-succinylornithine, ammonia and CO(2). The polypeptide is N-succinylarginine dihydrolase (Escherichia coli O81 (strain ED1a)).